We begin with the raw amino-acid sequence, 61 residues long: Potassium channel toxin alpha-KTx 15.6 (61 aa).

The signal sequence occupies residues 1-23 (MKAFYGMLVIFILCSTCYISVDS). Q24 carries the pyrrolidone carboxylic acid modification. Disulfide bonds link C31-C52, C37-C57, and C41-C59.

The protein belongs to the short scorpion toxin superfamily. Potassium channel inhibitor family. Alpha-KTx 15 subfamily. As to expression, expressed by the venom gland.

Its subcellular location is the secreted. Functionally, irreversibly blocks the A-type voltage-gated potassium channels in rat cerebellum granular cells (190 nM induce 50% inhibitory effect) (IC(50)=190 nM). Also weakly inhibits Kv1.2/KCNA2 and Kv1.3/KCNA3. The protein is Potassium channel toxin alpha-KTx 15.6 of Tityus discrepans (Venezuelan scorpion).